The sequence spans 308 residues: Sulfate adenylyltransferase subunit 2 (308 aa).

The disordered stretch occupies residues 286–308; that stretch reads RQGRIIDHDGSASMEKKKQEGYF.

It belongs to the PAPS reductase family. CysD subfamily. Heterodimer composed of CysD, the smaller subunit, and CysN.

It catalyses the reaction sulfate + ATP + H(+) = adenosine 5'-phosphosulfate + diphosphate. It functions in the pathway sulfur metabolism; hydrogen sulfide biosynthesis; sulfite from sulfate: step 1/3. In terms of biological role, with CysN forms the ATP sulfurylase (ATPS) that catalyzes the adenylation of sulfate producing adenosine 5'-phosphosulfate (APS) and diphosphate, the first enzymatic step in sulfur assimilation pathway. APS synthesis involves the formation of a high-energy phosphoric-sulfuric acid anhydride bond driven by GTP hydrolysis by CysN coupled to ATP hydrolysis by CysD. This chain is Sulfate adenylyltransferase subunit 2, found in Nocardia farcinica (strain IFM 10152).